Here is a 302-residue protein sequence, read N- to C-terminus: ICOS ligand (302 aa).

Residues 1-18 (MRLGSPGLLFLLFSSLRA) form the signal peptide. One can recognise an Ig-like V-type domain in the interval 19 to 129 (DTQEKEVRAM…LGFQEVLSVE (111 aa)). The Extracellular segment spans residues 19 to 256 (DTQEKEVRAM…VSTGEKNAAT (238 aa)). The cysteines at positions 37 and 113 are disulfide-linked. N-linked (GlcNAc...) asparagine glycosylation is found at N70, N137, N173, N186, and N225. Residues 141–227 (PVVSAPHSPS…ENVLLQQNLT (87 aa)) enclose the Ig-like C2-type domain. C158 and C216 are oxidised to a cystine. Residues 257–277 (WSILAVLCLLVVVAVAIGWVC) form a helical membrane-spanning segment. Topologically, residues 278–302 (RDRCLQHSYAGAWAVSPETELTGHV) are cytoplasmic.

It belongs to the immunoglobulin superfamily. BTN/MOG family. In terms of assembly, interacts with CTLA4 (in vitro). Expressed on peripheral blood B-cells and monocytes, as well as on monocyte-derived dendritic cells (at protein level). In terms of tissue distribution, widely expressed (brain, heart, kidney, liver, lung, pancreas, placenta, skeletal muscle, bone marrow, colon, ovary, prostate, testis, lymph nodes, leukocytes, spleen, thymus and tonsil). As to expression, detected only in lymph nodes, leukocytes and spleen. Expressed on activated monocytes and dendritic cells.

It localises to the cell membrane. In terms of biological role, ligand for the T-cell-specific cell surface receptor ICOS. Acts as a costimulatory signal for T-cell proliferation and cytokine secretion. Also induces B-cell proliferation and differentiation into plasma cells. Could play an important role in mediating local tissue responses to inflammatory conditions, as well as in modulating the secondary immune response by co-stimulating memory T-cell function. In endothelial cells, required for proper neutrophil transmigration in response to chemoattractants, such as CXCL8/IL8 or N-formyl-methionyl peptides (fMLP). In Homo sapiens (Human), this protein is ICOS ligand (ICOSLG).